We begin with the raw amino-acid sequence, 337 residues long: N-acetyl-gamma-glutamyl-phosphate reductase (337 aa).

Residue C149 is part of the active site.

It belongs to the NAGSA dehydrogenase family. Type 1 subfamily.

The protein localises to the cytoplasm. The catalysed reaction is N-acetyl-L-glutamate 5-semialdehyde + phosphate + NADP(+) = N-acetyl-L-glutamyl 5-phosphate + NADPH + H(+). The protein operates within amino-acid biosynthesis; L-arginine biosynthesis; N(2)-acetyl-L-ornithine from L-glutamate: step 3/4. Its function is as follows. Catalyzes the NADPH-dependent reduction of N-acetyl-5-glutamyl phosphate to yield N-acetyl-L-glutamate 5-semialdehyde. The polypeptide is N-acetyl-gamma-glutamyl-phosphate reductase (Wolinella succinogenes (strain ATCC 29543 / DSM 1740 / CCUG 13145 / JCM 31913 / LMG 7466 / NCTC 11488 / FDC 602W) (Vibrio succinogenes)).